The following is a 297-amino-acid chain: Protease HtpX homolog (297 aa).

A run of 2 helical transmembrane segments spans residues 5 to 25 and 44 to 64; these read IFLFLLSNILVITTIGIVLSI and IVALLVFSAVVGFVGSFMSLL. Position 155 (H155) interacts with Zn(2+). E156 is an active-site residue. H159 contributes to the Zn(2+) binding site. 2 helical membrane-spanning segments follow: residues 170–190 and 204–224; these read LLQGIVNTFVVFFARIAAWAV and FIAVIVFQIVFSILGSLVVFA. E230 contributes to the Zn(2+) binding site.

This sequence belongs to the peptidase M48B family. Zn(2+) serves as cofactor.

The protein resides in the cell membrane. This is Protease HtpX homolog from Bacillus licheniformis (strain ATCC 14580 / DSM 13 / JCM 2505 / CCUG 7422 / NBRC 12200 / NCIMB 9375 / NCTC 10341 / NRRL NRS-1264 / Gibson 46).